The primary structure comprises 88 residues: Protein K3 (88 aa).

Residues 8-82 (LPNAGDVIKG…TKGYIDVNYK (75 aa)) form the S1 motif domain. Binding to host EIF2AK2/PKR regions lie at residues 43–53 (SVKMHMDRYVE) and 74–79 (KGYIDV).

This sequence belongs to the poxviridae K3 protein family. Interacts with host EIF2AK2/PKR kinase.

Functionally, viral mimic of EIF2S1/eIF-2alpha that acts as a pseudosubstrate for EIF2AK2/PKR kinase. Inhibits therefore EIF2S1/eIF-2alpha phosphorylation by host EIF2AK2/PKR kinase and prevents protein synthesis shutoff. Determinant of host species specificity. The protein is Protein K3 of Vaccinia virus (strain Western Reserve) (VACV).